The chain runs to 375 residues: MMSKPHHATLESIKYTPGSLRLLDQRKLPLETVFDDVLTVEDIWSAIKEMRVRGAPAIAVSAALGIAVATQRKAANGELKSGREVQTFLLTSCDFVMTSRPTAVNLFNCLRDLKAQVDKLDPTKAAAEVAQAFVELAEAVYTNDVAFNEGIMRHGAAHILAAAKAEGRDKVSILTICNTGALATSRYGTALGVVRQLFYDGKLERVYACETRPWNQGARLTVYECVQEDIPCTLICDGAASSLMLNRKIDAVVVGADRICQNGDTANKIGTYNLAVSAKFHGVKLYVAAPTTTLDVKTASGNHVEIEEREPTEITTNLVTKQRVVADGPHLSIWNPVFDITPSELITGGIITEKGVQAPAASAPYYDIASIIAQA.

Asp257 functions as the Proton donor in the catalytic mechanism.

Belongs to the eIF-2B alpha/beta/delta subunits family. MtnA subfamily.

It localises to the cytoplasm. The protein localises to the nucleus. The catalysed reaction is 5-(methylsulfanyl)-alpha-D-ribose 1-phosphate = 5-(methylsulfanyl)-D-ribulose 1-phosphate. Its pathway is amino-acid biosynthesis; L-methionine biosynthesis via salvage pathway; L-methionine from S-methyl-5-thio-alpha-D-ribose 1-phosphate: step 1/6. Its function is as follows. Catalyzes the interconversion of methylthioribose-1-phosphate (MTR-1-P) into methylthioribulose-1-phosphate (MTRu-1-P). This Leishmania major protein is Methylthioribose-1-phosphate isomerase.